Here is a 205-residue protein sequence, read N- to C-terminus: Large ribosomal subunit protein uL4 (205 aa).

The tract at residues 47 to 70 (TRAQKSRAEVSGGGKKPFRQKGTG) is disordered.

Belongs to the universal ribosomal protein uL4 family. Part of the 50S ribosomal subunit.

One of the primary rRNA binding proteins, this protein initially binds near the 5'-end of the 23S rRNA. It is important during the early stages of 50S assembly. It makes multiple contacts with different domains of the 23S rRNA in the assembled 50S subunit and ribosome. In terms of biological role, forms part of the polypeptide exit tunnel. This chain is Large ribosomal subunit protein uL4, found in Acinetobacter baylyi (strain ATCC 33305 / BD413 / ADP1).